The sequence spans 389 residues: Chalcone synthase 8 (389 aa).

Residue C164 is part of the active site.

It belongs to the thiolase-like superfamily. Chalcone/stilbene synthases family.

It carries out the reaction (E)-4-coumaroyl-CoA + 3 malonyl-CoA + 3 H(+) = 2',4,4',6'-tetrahydroxychalcone + 3 CO2 + 4 CoA. It participates in secondary metabolite biosynthesis; flavonoid biosynthesis. In terms of biological role, the primary product of this enzyme is 4,2',4',6'-tetrahydroxychalcone (also termed naringenin-chalcone or chalcone) which can under specific conditions spontaneously isomerize into naringenin. This chain is Chalcone synthase 8 (CHS8), found in Medicago sativa (Alfalfa).